A 299-amino-acid polypeptide reads, in one-letter code: Acetaldehyde dehydrogenase (299 aa).

11 to 14 (SGNI) is a binding site for NAD(+). Cysteine 126 (acyl-thioester intermediate) is an active-site residue. Residues 157-165 (SAGPGTRAN) and asparagine 267 contribute to the NAD(+) site.

This sequence belongs to the acetaldehyde dehydrogenase family.

It carries out the reaction acetaldehyde + NAD(+) + CoA = acetyl-CoA + NADH + H(+). This chain is Acetaldehyde dehydrogenase, found in Bacillus cereus (strain ATCC 10987 / NRS 248).